The chain runs to 270 residues: Formamidopyrimidine-DNA glycosylase (270 aa).

Proline 2 (schiff-base intermediate with DNA) is an active-site residue. Residue glutamate 3 is the Proton donor of the active site. Residue lysine 58 is the Proton donor; for beta-elimination activity of the active site. 3 residues coordinate DNA: histidine 91, arginine 110, and arginine 151. Residues phenylalanine 236 to arginine 270 form an FPG-type zinc finger. Catalysis depends on arginine 260, which acts as the Proton donor; for delta-elimination activity.

It belongs to the FPG family. As to quaternary structure, monomer. It depends on Zn(2+) as a cofactor.

It catalyses the reaction Hydrolysis of DNA containing ring-opened 7-methylguanine residues, releasing 2,6-diamino-4-hydroxy-5-(N-methyl)formamidopyrimidine.. It carries out the reaction 2'-deoxyribonucleotide-(2'-deoxyribose 5'-phosphate)-2'-deoxyribonucleotide-DNA = a 3'-end 2'-deoxyribonucleotide-(2,3-dehydro-2,3-deoxyribose 5'-phosphate)-DNA + a 5'-end 5'-phospho-2'-deoxyribonucleoside-DNA + H(+). In terms of biological role, involved in base excision repair of DNA damaged by oxidation or by mutagenic agents. Acts as a DNA glycosylase that recognizes and removes damaged bases. Has a preference for oxidized purines, such as 7,8-dihydro-8-oxoguanine (8-oxoG). Has AP (apurinic/apyrimidinic) lyase activity and introduces nicks in the DNA strand. Cleaves the DNA backbone by beta-delta elimination to generate a single-strand break at the site of the removed base with both 3'- and 5'-phosphates. In Pseudomonas paraeruginosa (strain DSM 24068 / PA7) (Pseudomonas aeruginosa (strain PA7)), this protein is Formamidopyrimidine-DNA glycosylase.